The chain runs to 312 residues: Ribosomal RNA small subunit methyltransferase H (312 aa).

S-adenosyl-L-methionine is bound by residues 33 to 35 (SGH), Asp53, Phe80, Asp101, and Gln108.

Belongs to the methyltransferase superfamily. RsmH family.

The protein localises to the cytoplasm. The enzyme catalyses cytidine(1402) in 16S rRNA + S-adenosyl-L-methionine = N(4)-methylcytidine(1402) in 16S rRNA + S-adenosyl-L-homocysteine + H(+). In terms of biological role, specifically methylates the N4 position of cytidine in position 1402 (C1402) of 16S rRNA. The chain is Ribosomal RNA small subunit methyltransferase H from Desulforapulum autotrophicum (strain ATCC 43914 / DSM 3382 / VKM B-1955 / HRM2) (Desulfobacterium autotrophicum).